Here is a 556-residue protein sequence, read N- to C-terminus: Arginine--tRNA ligase (556 aa).

Residues 132-142 (ANPTGDLHLGH) carry the 'HIGH' region motif.

This sequence belongs to the class-I aminoacyl-tRNA synthetase family. As to quaternary structure, monomer.

It localises to the cytoplasm. It carries out the reaction tRNA(Arg) + L-arginine + ATP = L-arginyl-tRNA(Arg) + AMP + diphosphate. In Listeria welshimeri serovar 6b (strain ATCC 35897 / DSM 20650 / CCUG 15529 / CIP 8149 / NCTC 11857 / SLCC 5334 / V8), this protein is Arginine--tRNA ligase.